Consider the following 345-residue polypeptide: Phosphoribosylformylglycinamidine cyclo-ligase (345 aa).

It belongs to the AIR synthase family.

Its subcellular location is the cytoplasm. The enzyme catalyses 2-formamido-N(1)-(5-O-phospho-beta-D-ribosyl)acetamidine + ATP = 5-amino-1-(5-phospho-beta-D-ribosyl)imidazole + ADP + phosphate + H(+). It participates in purine metabolism; IMP biosynthesis via de novo pathway; 5-amino-1-(5-phospho-D-ribosyl)imidazole from N(2)-formyl-N(1)-(5-phospho-D-ribosyl)glycinamide: step 2/2. The polypeptide is Phosphoribosylformylglycinamidine cyclo-ligase (Anaeromyxobacter sp. (strain K)).